The chain runs to 440 residues: Glyceraldehyde-3-phosphate dehydrogenase, testis-specific (440 aa).

The segment at 1–105 (MSRRDVVLTN…PPPPPLQKPA (105 aa)) is testis-specific N-terminal extension. 2 stretches are compositionally biased toward pro residues: residues 40 to 75 (PPKL…PPQI) and 83 to 102 (APPP…PPLQ). Residues 40-106 (PPKLEDPPPT…PPPPLQKPAR (67 aa)) form a disordered region. Residues 117–118 (RI), D138, K183, Y205, and T225 each bind NAD(+). Residues 255 to 257 (SCT), T286, 315 to 316 (TG), and R338 contribute to the D-glyceraldehyde 3-phosphate site. C256 functions as the Nucleophile in the catalytic mechanism. A Phosphoserine modification is found at S358. Residue N420 participates in NAD(+) binding.

The protein belongs to the glyceraldehyde-3-phosphate dehydrogenase family. Homotetramer. In terms of tissue distribution, testis specific.

It localises to the cytoplasm. It catalyses the reaction D-glyceraldehyde 3-phosphate + phosphate + NAD(+) = (2R)-3-phospho-glyceroyl phosphate + NADH + H(+). It participates in carbohydrate degradation; glycolysis; pyruvate from D-glyceraldehyde 3-phosphate: step 1/5. Functionally, may play an important role in regulating the switch between different pathways for energy production during spermiogenesis and in the spermatozoon. Required for sperm motility and male fertility. The chain is Glyceraldehyde-3-phosphate dehydrogenase, testis-specific (Gapdhs) from Mus musculus (Mouse).